Reading from the N-terminus, the 287-residue chain is Putative sugar uptake protein LJ_0170 (287 aa).

10 helical membrane-spanning segments follow: residues 4–23 (VYLF…IASV), 28–50 (VYNQ…MAIM), 56–78 (WSLF…GQYI), 91–108 (ISTG…VLAF), 118–137 (LYGF…TSFT), 150–169 (VSTI…SSSI), 179–198 (SIFF…YTLV), 211–230 (VQSG…YILS), 240–259 (FVIS…IFLH), and 266–285 (GLIF…MLTT).

The protein belongs to the GRP transporter (TC 2.A.7.5) family.

It is found in the cell membrane. This is Putative sugar uptake protein LJ_0170 from Lactobacillus johnsonii (strain CNCM I-12250 / La1 / NCC 533).